A 152-amino-acid polypeptide reads, in one-letter code: Transcriptional regulator MraZ (152 aa).

SpoVT-AbrB domains lie at A5–E52 and A81–A124.

It belongs to the MraZ family. Forms oligomers.

The protein localises to the cytoplasm. The protein resides in the nucleoid. The polypeptide is Transcriptional regulator MraZ (Shewanella piezotolerans (strain WP3 / JCM 13877)).